The chain runs to 215 residues: uncharacterized protein (215 aa).

Helical transmembrane passes span 40–60 and 72–92; these read VLFP…FCSL and LIWF…VGYL.

The protein resides in the mitochondrion membrane. This is an uncharacterized protein from Arabidopsis thaliana (Mouse-ear cress).